Here is a 233-residue protein sequence, read N- to C-terminus: MSACQTPLIVALDFPTRDAALKLADQLDPALCRVKVGKELFTSSASGIVETLCAKGFEVFLDLKFHDIPNTTAMAVKAAAEMGVWMVNVHCSGGLRMMSACREELAKRSGPQPLLIGVTVLTSMEREDLAGIGLDVDPQVQVLRLAALAQKAGMDGLVCSALEAPALKAAHPSLQLVTPGIRPAGSAQDDQRRILTPRQALDAGSDYLVIGRPISQAADPAKALAAVVAEIRG.

Residues Asp-13, Lys-35, 62–71 (DLKFHDIPNT), Thr-122, Arg-182, Gln-191, Gly-211, and Arg-212 each bind substrate. The active-site Proton donor is the Lys-64.

The protein belongs to the OMP decarboxylase family. Type 1 subfamily. In terms of assembly, homodimer.

The catalysed reaction is orotidine 5'-phosphate + H(+) = UMP + CO2. The protein operates within pyrimidine metabolism; UMP biosynthesis via de novo pathway; UMP from orotate: step 2/2. In terms of biological role, catalyzes the decarboxylation of orotidine 5'-monophosphate (OMP) to uridine 5'-monophosphate (UMP). This Pseudomonas entomophila (strain L48) protein is Orotidine 5'-phosphate decarboxylase.